The sequence spans 598 residues: Phenylalanine--tRNA ligase beta subunit, cytoplasmic (598 aa).

Residues 303–383 (LAVYDMEVPL…IAYGFNNIPT (81 aa)) form the B5 domain. Aspartate 361, aspartate 367, glutamate 370, and aspartate 371 together coordinate Mg(2+).

Belongs to the phenylalanyl-tRNA synthetase beta subunit family. Type 2 subfamily. As to quaternary structure, tetramer of two alpha and two beta subunits. Requires Mg(2+) as cofactor.

The protein localises to the cytoplasm. It localises to the cytosol. It catalyses the reaction tRNA(Phe) + L-phenylalanine + ATP = L-phenylalanyl-tRNA(Phe) + AMP + diphosphate + H(+). The sequence is that of Phenylalanine--tRNA ligase beta subunit, cytoplasmic from Arabidopsis thaliana (Mouse-ear cress).